The following is a 180-amino-acid chain: MPSKAFETLPNIYLVGPMGAGKTTVGRHLAELLGREFLDSDHEIERKTGATIPWIFEKEGEVGFRTRETVVLNELTSRKALVLATGGGAITQAPNREFLKQRGIVVYLYTPVELQLQRTYRDKNRPLLQVENPEQKLRDLLKIRDPLYREVAHYTIETNQGAARDLAQKILQLILSNKLK.

19 to 24 is an ATP binding site; the sequence is GAGKTT. Thr23 serves as a coordination point for Mg(2+). Substrate contacts are provided by Asp41, Arg65, and Gly87. Residue Arg125 coordinates ATP. Residue Arg144 participates in substrate binding.

The protein belongs to the shikimate kinase family. Monomer. Mg(2+) serves as cofactor.

The protein resides in the cytoplasm. The enzyme catalyses shikimate + ATP = 3-phosphoshikimate + ADP + H(+). The protein operates within metabolic intermediate biosynthesis; chorismate biosynthesis; chorismate from D-erythrose 4-phosphate and phosphoenolpyruvate: step 5/7. In terms of biological role, catalyzes the specific phosphorylation of the 3-hydroxyl group of shikimic acid using ATP as a cosubstrate. This is Shikimate kinase from Acinetobacter baumannii (strain SDF).